Consider the following 135-residue polypeptide: Large ribosomal subunit protein uL16c (135 aa).

Belongs to the universal ribosomal protein uL16 family. In terms of assembly, part of the 50S ribosomal subunit.

It localises to the plastid. The protein localises to the chloroplast. This Phaseolus vulgaris (Kidney bean) protein is Large ribosomal subunit protein uL16c.